An 810-amino-acid polypeptide reads, in one-letter code: ATP-dependent RNA helicase dbp4 (810 aa).

Positions 1-28 (MAPAAGPRTGKHAKPPRSKTLKRKRGQD) are disordered. Positions 9 to 25 (TGKHAKPPRSKTLKRKR) are enriched in basic residues. The Q motif motif lies at 47–75 (KSFSDLPLSEPTASGLASSHYKTLTDIQS). One can recognise a Helicase ATP-binding domain in the interval 78-252 (ISHALKGRDV…RLSLQDPEYV (175 aa)). 91–98 (AKTGSGKT) contributes to the ATP binding site. Residues 200-203 (DEAD) carry the DEAD box motif. In terms of domain architecture, Helicase C-terminal spans 278 to 437 (KLDILWSFIR…SIKDQLQNMC (160 aa)). Disordered stretches follow at residues 494–542 (GDDT…DRMF), 590–615 (AGDK…DVKV), and 690–810 (ERTR…GLLG). A compositionally biased stretch (basic and acidic residues) spans 522 to 542 (GEKKSKKKEEPQVRTKYDRMF). The span at 690–704 (ERTRMADMEDKEIAK) shows a compositional bias: basic and acidic residues. Over residues 705 to 714 (QKRREKKEKR) the composition is skewed to basic residues. Basic and acidic residues predominate over residues 764 to 786 (KFTEANDREEAEPWYKKSKKPSD).

It belongs to the DEAD box helicase family. DDX10/DBP4 subfamily. As to quaternary structure, interacts with the U3 and U14 snoRNAs. Associates with pre-ribosomal complexes.

The protein localises to the nucleus. The protein resides in the nucleolus. It catalyses the reaction ATP + H2O = ADP + phosphate + H(+). Its function is as follows. ATP-dependent RNA helicase required for ribosome biogenesis. Involved in the release of U14 snoRNA in pre-ribosomal complexes. Required for pre-rRNA cleavage at site A2. This Neosartorya fischeri (strain ATCC 1020 / DSM 3700 / CBS 544.65 / FGSC A1164 / JCM 1740 / NRRL 181 / WB 181) (Aspergillus fischerianus) protein is ATP-dependent RNA helicase dbp4 (dbp4).